The following is a 478-amino-acid chain: Nuclear distribution protein PAC1 (478 aa).

The LisH domain occupies 9–41 (QAEELHKAMIAYLLSANLPKSAAALREELADSV). Residues 60 to 87 (TSVVRLQKKIMDLESRNNALQSELDSAT) adopt a coiled-coil conformation. WD repeat units follow at residues 113–154 (SHRE…RTIK), 156–196 (HTKA…KNIR), 200–247 (GHDH…CVKT), 250–289 (GHVDWVRDVAASPDGRFLFSAGNDQVARLWDVSSGETKST), 292–352 (GHEH…IKTL), 354–393 (GHDNWVRALAFHPGGKYLLSVSDDKTLRCWDLTQECKCVR), 398–439 (AHGH…AASA), and 440–477 (INGVVPTGKKEDPGGGPMMGIRCVIATGSVDLKVRVFA).

This sequence belongs to the WD repeat LIS1/nudF family. Self-associates. Interacts with NDL1 and dynein.

The protein resides in the cytoplasm. The protein localises to the cytoskeleton. It localises to the spindle pole. Positively regulates the activity of the minus-end directed microtubule motor protein dynein. May enhance dynein-mediated microtubule sliding by targeting dynein to the microtubule plus end. Required for nuclear migration during vegetative growth as well as development. Required for retrograde early endosome (EE) transport from the hyphal tip. Required for localization of dynein to the mitotic spindle poles. Recruits additional proteins to the dynein complex at SPBs. The sequence is that of Nuclear distribution protein PAC1 from Paracoccidioides brasiliensis (strain Pb18).